Here is a 767-residue protein sequence, read N- to C-terminus: MSLIQLSPSNGDLLLINSGSFSTGKVIRTRNELVFYTDQYGNSTGYRWLGNLPHVINGNSPQTDGGISSTSWESYITSNLYDKLKSENITLSGTAHLPTVEVAYGLKKGSLKVWSAGLVSSSSQYWLYTDGTVWSGVGVLGTEPDVPFTQIHLQRDIIKYNYIVQTDGETLINIPYDFTSIDVFINGVLQNSNSGSYKIIQSTIQFSDVLNKGDNIQFYLSNVPISSVRFALSSDLTNYVLKSDLSNTSGANNVGFYPGGTVQDAIVYTTPEMFGAIGDGITDDTNALQNAINFSKNKTLLFSNGKKYRTKNLIVPHPMTFKGLGRRQDGAIIPYGNVSSESFIHTGTLILLTTSSTVTFYDLTVDARGITLSFVDGQRLTGVGAADNNSGVYQSGLQMYNCNVSGFSGNNLYGGGSKSFGILKDCQFESSGKSCVRIDGVDWRISHCAIGRSLESYGIEILNENNFVSNCDSYFNKLSGIFYQQPTGMAFIKLIGNTINSNGQHGISCSLPYAQPAGTVITNNIFWNNSTELTGTYHNIDLNYGRGHIVENNVHKAYQATAGSDSARCGYCINLRNGATLSGFINDAIDPLYSYVIDKINVNSQNFANQNEISIGTGLSLTKTVSSDTSIGIKLNINSESYDRVQINPGKILLGNGSAEPTHGIQQLAAYPGITMGVLGLGVVGNYSSSVFRIGTHRIWSGGDNTLRTKYGADPTSATDGNILSVKVSVPSTATSTGIVGQWAADDTYLYICTAANTWKRVSINTW.

The protein in the C-terminal section; belongs to the K30/K69-specific depolymerase family.

The protein localises to the virion. In terms of biological role, functions as a receptor binding protein (RBP) and probably mediates the attachment to the host capsular exopolysaccharides. Displays a depolymerase activity that specifically degrades the K30/K69-type polysaccharides of Klebsiella pneumoniae capsule. This chain is Depolymerase, capsule K30/K69-specific, found in Klebsiella phage K64-1 (Bacteriophage K64-1).